A 133-amino-acid polypeptide reads, in one-letter code: Acyl-CoA thioesterase YbgC (133 aa).

Asp-11 is a catalytic residue.

This sequence belongs to the 4-hydroxybenzoyl-CoA thioesterase family. Homotetramer. May interact with CagA.

Thioesterase that may be involved in phospholipid metabolism. Displays acyl-CoA thioesterase activity with lauroyl-CoA (C12:0), myristoyl-CoA (C14:0), palmitoyl-CoA (C16:0), stearoyl-CoA (C18:0) and benzoyl-CoA, catalyzing the hydrolysis of the thioester bond. Has low activity with butyryl-CoA and octanoyl-CoA. The protein is Acyl-CoA thioesterase YbgC (ybgC) of Helicobacter pylori (strain ATCC 700392 / 26695) (Campylobacter pylori).